The primary structure comprises 175 residues: MVKLRETEVILRLCIVFFLLLTSCLIGLDSQTKEIAYIHKNVSFRYLLALEAELYIDVVVAAYNLVQLGLGWYNVEQKTSNPKWFSYLLDQTAAYVVFAGTSAAAQHSLLVVTGSRELQWMKWCYKFTRFCFQMGSAIILNYIAAALMVLLSSISAFNLFRLYSPKRFFRFKSSS.

Residues 1 to 7 lie on the Cytoplasmic side of the membrane; the sequence is MVKLRET. A helical membrane pass occupies residues 8 to 28; that stretch reads EVILRLCIVFFLLLTSCLIGL. Topologically, residues 29 to 45 are extracellular; it reads DSQTKEIAYIHKNVSFR. Asn-41 is a glycosylation site (N-linked (GlcNAc...) asparagine). The chain crosses the membrane as a helical span at residues 46-66; sequence YLLALEAELYIDVVVAAYNLV. The Cytoplasmic portion of the chain corresponds to 67–91; the sequence is QLGLGWYNVEQKTSNPKWFSYLLDQ. A helical transmembrane segment spans residues 92 to 112; that stretch reads TAAYVVFAGTSAAAQHSLLVV. At 113 to 136 the chain is on the extracellular side; sequence TGSRELQWMKWCYKFTRFCFQMGS. The chain crosses the membrane as a helical span at residues 137 to 157; that stretch reads AIILNYIAAALMVLLSSISAF. Over 158–175 the chain is Cytoplasmic; the sequence is NLFRLYSPKRFFRFKSSS.

It belongs to the Casparian strip membrane proteins (CASP) family. Homodimer and heterodimers.

It localises to the cell membrane. This Arabidopsis thaliana (Mouse-ear cress) protein is CASP-like protein 2C1.